The chain runs to 381 residues: 2-oxoglutarate-dependent dioxygenase FGSG_00048 (381 aa).

It belongs to the iron/ascorbate-dependent oxidoreductase family. It depends on Fe(2+) as a cofactor.

It participates in mycotoxin biosynthesis. Functionally, 2-oxoglutarate-dependent dioxygenase; part of the gene cluster that mediates the biosynthesis of gramillins A and B, bicyclic lipopeptides that induce cell death in maize leaves but not in wheat leaves. The nonribosomal peptide synthetase GRA1 incorporates respectively a glutamic adic (Glu), a leucine (Leu), a serine (Ser), a hydroxyglutamine (HOGln), a 2-amino decanoic acid, and 2 cysteins (CysB and CysA). The biosynthesis of 2-amino decanoic acid incorporated in gramillins could be initiated by a fatty acid synthase composed of the alpha and beta subunits FGSG_00036 and FGSG_11656. The cytochrome P450 monooxygenase FGSG_15680 could hydroxylate the fatty acid chain. Subsequent oxidation to the ketone by the oxidoreductase FGSG_00048 and transamination by aminotransferase FGSG_00049 could form 2-amino-decanoic acid. On the other hand, FGSG_15680 could also be responsible for the HO-modified glutamine at the gamma-position. Whether hydroxylation occurs on the fully assembled product or on the Gln residue prior to assembly into the gramillins requires further proof. The thioredoxin FGSG_00043 could also be required for the disulfide-bond formation between CysA and CysB. The specific involvement of the remaining proteins from the cluster is more difficult to discern, but could have broader regulatory (FGSG_00040 and FGSG_11657) or enzymatic functions (FGSG_00044 and FGSG_00045). The final C-domain of GRA1 does not possess the expected sequence of a termination CT domain, often implicated in macrocyclization and release of a cyclopeptidein fungal NRPs; and the thioesterase FGSG_00047 may act in concert with the terminal C-domain of GRA1 to catalyze the formation of the macrocyclic anhydride and release of the products. The chain is 2-oxoglutarate-dependent dioxygenase FGSG_00048 from Gibberella zeae (strain ATCC MYA-4620 / CBS 123657 / FGSC 9075 / NRRL 31084 / PH-1) (Wheat head blight fungus).